The primary structure comprises 179 residues: B-cell acute lymphoblastic leukemia-expressed protein (179 aa).

Disordered regions lie at residues 1–20 (MMKD…TDLQ) and 65–86 (RDTP…RGKA). Positions 10–20 (SWASEESTDLQ) are enriched in polar residues.

This is B-cell acute lymphoblastic leukemia-expressed protein (BLACE) from Homo sapiens (Human).